The chain runs to 2126 residues: Phthioceranic/hydroxyphthioceranic acid synthase (2126 aa).

In terms of domain architecture, Ketosynthase family 3 (KS3) spans 24 to 447 (VTPVAVIGMA…GTNVHAVVEQ (424 aa)). Cys196 (acyl-thioester intermediate; for beta-ketoacyl synthase activity) is an active-site residue. Active-site for beta-ketoacyl synthase activity residues include His331 and His367. A linker domain (LD) region spans residues 449–549 (PQTEAQPHAA…VYQPAVGQDD (101 aa)). The tract at residues 550-849 (RGPVWLFSGQ…VAALAGMRRE (300 aa)) is acyltransferase (AT). Ser641 functions as the Acyl-ester intermediate; for acyltransferase activity in the catalytic mechanism. The segment at 909-1191 (STVAVHPLLG…LAVCGLRIGT (283 aa)) is dehydratase (DH). An N-terminal hotdog fold region spans residues 914-1032 (HPLLGAHVRL…RRASAVLQQV (119 aa)). In terms of domain architecture, PKS/mFAS DH spans 914–1198 (HPLLGAHVRL…IGTGVSERDK (285 aa)). The active-site Proton acceptor; for dehydratase activity is His947. The segment at 1051-1198 (PCRVDGEDLR…IGTGVSERDK (148 aa)) is C-terminal hotdog fold. The active-site Proton donor; for dehydratase activity is the Asp1115. The segment at 1227–1398 (KWLLISDCAA…SEEDETAWRD (172 aa)) is pseudo beta-ketoacyl reductase (PsiKR). The interval 1426–1750 (SGMRLQIRTP…EHTGKLVLHI (325 aa)) is enoylreductase (ER). The beta-ketoacyl reductase (KR) stretch occupies residues 1772–2019 (GSYIITGGLG…AERSRFFEVF (248 aa)). NADP(+)-binding positions include 1780–1783 (LGGL), 1803–1806 (SRTQ), 1831–1832 (DI), and 1904–1905 (FS). The Carrier domain maps to 2040–2126 (DEWPARLRQL…DAPAAALSSQ (87 aa)). The residue at position 2075 (Ser2075) is an O-(pantetheine 4'-phosphoryl)serine.

The cofactor is pantetheine 4'-phosphate.

The enzyme catalyses hexadecanoyl-[(hydroxy)phthioceranic acid synthase] + 7 (S)-methylmalonyl-CoA + 14 NADPH + 21 H(+) = C37-phthioceranyl-[(hydroxy)phthioceranic acid synthase] + 7 CO2 + 14 NADP(+) + 7 CoA + 7 H2O. It carries out the reaction hexadecanoyl-[(hydroxy)phthioceranic acid synthase] + 8 (S)-methylmalonyl-CoA + 16 NADPH + 24 H(+) = C40-phthioceranyl-[(hydroxy)phthioceranic acid synthase] + 8 CO2 + 16 NADP(+) + 8 CoA + 8 H2O. Its pathway is lipid metabolism; fatty acid biosynthesis. It functions in the pathway glycolipid metabolism; sulfolipid-1 biosynthesis. Involved in sulfolipid-1 biosynthesis. Catalyzes the synthesis of the hepta- and octamethyl phthioceranic and hydroxyphthioceranic acids, the methyl-branched acyl constituents of sulfolipids. The polypeptide is Phthioceranic/hydroxyphthioceranic acid synthase (pks2) (Mycobacterium bovis (strain ATCC BAA-935 / AF2122/97)).